The following is a 196-amino-acid chain: Pyridoxal 5'-phosphate synthase subunit PdxT (196 aa).

47–49 lines the L-glutamine pocket; that stretch reads GES. Cysteine 79 acts as the Nucleophile in catalysis. Residues arginine 106 and 134–135 contribute to the L-glutamine site; that span reads IR. Active-site charge relay system residues include histidine 170 and glutamate 172.

Belongs to the glutaminase PdxT/SNO family. In the presence of PdxS, forms a dodecamer of heterodimers. Only shows activity in the heterodimer.

The catalysed reaction is aldehydo-D-ribose 5-phosphate + D-glyceraldehyde 3-phosphate + L-glutamine = pyridoxal 5'-phosphate + L-glutamate + phosphate + 3 H2O + H(+). The enzyme catalyses L-glutamine + H2O = L-glutamate + NH4(+). The protein operates within cofactor biosynthesis; pyridoxal 5'-phosphate biosynthesis. In terms of biological role, catalyzes the hydrolysis of glutamine to glutamate and ammonia as part of the biosynthesis of pyridoxal 5'-phosphate. The resulting ammonia molecule is channeled to the active site of PdxS. The chain is Pyridoxal 5'-phosphate synthase subunit PdxT from Bacillus subtilis (strain 168).